A 106-amino-acid polypeptide reads, in one-letter code: ATP-dependent Clp protease adapter protein ClpS (106 aa).

Positions 1-10 are enriched in basic and acidic residues; that stretch reads MSQKTVHDQD. The interval 1 to 23 is disordered; it reads MSQKTVHDQDNALLLETGNTKVA.

Belongs to the ClpS family. As to quaternary structure, binds to the N-terminal domain of the chaperone ClpA.

Functionally, involved in the modulation of the specificity of the ClpAP-mediated ATP-dependent protein degradation. The polypeptide is ATP-dependent Clp protease adapter protein ClpS (Xylella fastidiosa (strain M23)).